The sequence spans 772 residues: Mitochondrial intermediate peptidase (772 aa).

A mitochondrion-targeting transit peptide spans 1-37 (MLRTIILKAGSNASIPSPSRQNKLLRFFATAGAVSRT). Residue His-558 participates in Zn(2+) binding. Glu-559 is an active-site residue. Positions 562 and 587 each coordinate Zn(2+).

It belongs to the peptidase M3 family. The cofactor is Zn(2+).

It is found in the mitochondrion matrix. It catalyses the reaction Release of an N-terminal octapeptide as second stage of processing of some proteins imported into the mitochondrion.. Stimulated by Fe(2+). Its function is as follows. Cleaves proteins, imported into the mitochondrion, to their mature size. While most mitochondrial precursor proteins are processed to the mature form in one step by mitochondrial processing peptidase (MPP), the sequential cleavage by MIP of an octapeptide after initial processing by MPP is a required step for a subgroup of nuclear-encoded precursor proteins destined for the matrix or the inner membrane. Cleaves precursor proteins of respiratory components, including subunits of the electron transport chain and tricarboxylic acid cycle enzymes, and components of the mitochondrial genetic machinery, including ribosomal proteins, translation factors, and proteins required for mitochondrial DNA metabolism. This chain is Mitochondrial intermediate peptidase (OCT1), found in Saccharomyces cerevisiae (strain ATCC 204508 / S288c) (Baker's yeast).